The chain runs to 512 residues: 2-isopropylmalate synthase (512 aa).

Residues 5-268 (LIIFDTTLRD…DVDIETQHIL (264 aa)) enclose the Pyruvate carboxyltransferase domain. Mn(2+)-binding residues include aspartate 14, histidine 202, histidine 204, and asparagine 239. Residues 394–512 (SFVSLSQHSE…SKADRVAAQG (119 aa)) form a regulatory domain region.

The protein belongs to the alpha-IPM synthase/homocitrate synthase family. LeuA type 1 subfamily. In terms of assembly, homodimer. Requires Mn(2+) as cofactor.

Its subcellular location is the cytoplasm. The catalysed reaction is 3-methyl-2-oxobutanoate + acetyl-CoA + H2O = (2S)-2-isopropylmalate + CoA + H(+). The protein operates within amino-acid biosynthesis; L-leucine biosynthesis; L-leucine from 3-methyl-2-oxobutanoate: step 1/4. Catalyzes the condensation of the acetyl group of acetyl-CoA with 3-methyl-2-oxobutanoate (2-ketoisovalerate) to form 3-carboxy-3-hydroxy-4-methylpentanoate (2-isopropylmalate). In Albidiferax ferrireducens (strain ATCC BAA-621 / DSM 15236 / T118) (Rhodoferax ferrireducens), this protein is 2-isopropylmalate synthase.